The chain runs to 288 residues: 2-hydroxy-6-oxononadienedioate/2-hydroxy-6-oxononatrienedioate hydrolase (288 aa).

The active-site Proton acceptor is histidine 267.

This sequence belongs to the AB hydrolase superfamily. MhpC family. In terms of assembly, homodimer.

It catalyses the reaction (2Z,4E)-2-hydroxy-6-oxonona-2,4-dienedioate + H2O = (2Z)-2-hydroxypenta-2,4-dienoate + succinate + H(+). The catalysed reaction is (2Z,4E,7E)-2-hydroxy-6-oxonona-2,4,7-trienedioate + H2O = (2Z)-2-hydroxypenta-2,4-dienoate + fumarate + H(+). It participates in aromatic compound metabolism; 3-phenylpropanoate degradation. In terms of biological role, catalyzes the cleavage of the C5-C6 bond of 2-hydroxy-6-oxononadienedioate and 2-hydroxy-6-oxononatrienedioate, a dienol ring fission product of the bacterial meta-cleavage pathway for degradation of phenylpropionic acid. In Escherichia coli O81 (strain ED1a), this protein is 2-hydroxy-6-oxononadienedioate/2-hydroxy-6-oxononatrienedioate hydrolase.